A 326-amino-acid polypeptide reads, in one-letter code: Ketol-acid reductoisomerase (NADP(+)) (326 aa).

The KARI N-terminal Rossmann domain maps to 1-180 (MDIIHDNAAD…GLTRGGVLEC (180 aa)). Residues 24 to 27 (YGAQ), Arg-47, and Ser-51 contribute to the NADP(+) site. His-106 is an active-site residue. Residue Gly-132 participates in NADP(+) binding. A KARI C-terminal knotted domain is found at 181-326 (TMAQETYEDL…AKIRSLFERN (146 aa)). 4 residues coordinate Mg(2+): Asp-189, Glu-193, Glu-225, and Glu-229. Residue Ser-250 coordinates substrate.

Belongs to the ketol-acid reductoisomerase family. Mg(2+) serves as cofactor.

The enzyme catalyses (2R)-2,3-dihydroxy-3-methylbutanoate + NADP(+) = (2S)-2-acetolactate + NADPH + H(+). It carries out the reaction (2R,3R)-2,3-dihydroxy-3-methylpentanoate + NADP(+) = (S)-2-ethyl-2-hydroxy-3-oxobutanoate + NADPH + H(+). Its pathway is amino-acid biosynthesis; L-isoleucine biosynthesis; L-isoleucine from 2-oxobutanoate: step 2/4. It participates in amino-acid biosynthesis; L-valine biosynthesis; L-valine from pyruvate: step 2/4. Its function is as follows. Involved in the biosynthesis of branched-chain amino acids (BCAA). Catalyzes an alkyl-migration followed by a ketol-acid reduction of (S)-2-acetolactate (S2AL) to yield (R)-2,3-dihydroxy-isovalerate. In the isomerase reaction, S2AL is rearranged via a Mg-dependent methyl migration to produce 3-hydroxy-3-methyl-2-ketobutyrate (HMKB). In the reductase reaction, this 2-ketoacid undergoes a metal-dependent reduction by NADPH to yield (R)-2,3-dihydroxy-isovalerate. The polypeptide is Ketol-acid reductoisomerase (NADP(+)) (Akkermansia muciniphila (strain ATCC BAA-835 / DSM 22959 / JCM 33894 / BCRC 81048 / CCUG 64013 / CIP 107961 / Muc)).